A 494-amino-acid chain; its full sequence is 3-octaprenyl-4-hydroxybenzoate carboxy-lyase (494 aa).

Residue Asn-172 coordinates Mn(2+). Prenylated FMN is bound by residues 175–177, 189–191, and 194–195; these read IYR, RWL, and RG. Position 238 (Glu-238) interacts with Mn(2+). Asp-294 serves as the catalytic Proton donor.

The protein belongs to the UbiD family. As to quaternary structure, homohexamer. Requires prenylated FMN as cofactor. Mn(2+) serves as cofactor.

The protein localises to the cell membrane. The enzyme catalyses a 4-hydroxy-3-(all-trans-polyprenyl)benzoate + H(+) = a 2-(all-trans-polyprenyl)phenol + CO2. It participates in cofactor biosynthesis; ubiquinone biosynthesis. Functionally, catalyzes the decarboxylation of 3-octaprenyl-4-hydroxy benzoate to 2-octaprenylphenol, an intermediate step in ubiquinone biosynthesis. The chain is 3-octaprenyl-4-hydroxybenzoate carboxy-lyase from Albidiferax ferrireducens (strain ATCC BAA-621 / DSM 15236 / T118) (Rhodoferax ferrireducens).